A 98-amino-acid polypeptide reads, in one-letter code: uncharacterized protein (98 aa).

A disordered region spans residues 77-98 (SERAGEEVPPLAVAGSDDGHDH).

It to M.tuberculosis Rv1991c and Rv3269.

This is an uncharacterized protein from Mycobacterium bovis (strain ATCC BAA-935 / AF2122/97).